A 109-amino-acid chain; its full sequence is Protein GOLVEN 5 (109 aa).

The signal sequence occupies residues 1–24; sequence MTNITSSFLCLLILLLFCLSFGYS. The propeptide occupies 25-96; sequence LHGDKDEVLS…EEDDLVAYTA (72 aa). The segment at 54–88 is disordered; the sequence is KKAQVRGRSGQEFSKETTKMMMKKTTKKETNVEEE. The residue at position 98 (Tyr98) is a Sulfotyrosine. Pro106 bears the Hydroxyproline mark.

Belongs to the RGF family. As to quaternary structure, binds to LRR receptor-like serine/threonine-protein kinases RGI1, RGI2 and RGI3 to trigger their dimerization with SERK proteins and subsequent signaling. As to expression, expressed in root tips.

The protein localises to the secreted. In terms of biological role, signaling peptide (root growth factor) that maintains the postembryonic root stem cell niche in a PIN2-traffic dependent manner. Root growth factor that regulates the pattern of root growth and lateral root development by modulating the length and the number of cortical cells in the root apical meristem (RAM), and the anticlinal asymmetric cell divisions in lateral root initiation cells. Influences the longitudinal growth rate in the primary root in response to phosphate ion (Pi)-deprivation. The protein is Protein GOLVEN 5 of Arabidopsis thaliana (Mouse-ear cress).